A 389-amino-acid chain; its full sequence is 26S proteasome non-ATPase regulatory subunit 6 (389 aa).

The PCI domain maps to 193–361 (DFKQAAELFL…EIVETNRPDS (169 aa)).

This sequence belongs to the proteasome subunit S10 family. As to quaternary structure, component of the 19S proteasome regulatory particle complex. The 26S proteasome consists of a 20S core particle (CP) and two 19S regulatory subunits (RP). The regulatory particle is made of a lid composed of 9 subunits including PSMD6, a base containing 6 ATPases and few additional components.

Its function is as follows. Component of the 26S proteasome, a multiprotein complex involved in the ATP-dependent degradation of ubiquitinated proteins. This complex plays a key role in the maintenance of protein homeostasis by removing misfolded or damaged proteins, which could impair cellular functions, and by removing proteins whose functions are no longer required. Therefore, the proteasome participates in numerous cellular processes, including cell cycle progression, apoptosis, or DNA damage repair. This chain is 26S proteasome non-ATPase regulatory subunit 6 (Psmd6), found in Mus musculus (Mouse).